The primary structure comprises 361 residues: Ribosomal RNA large subunit methyltransferase M (361 aa).

Residues Ser-187, 220 to 223, Asp-239, Asp-259, and Asp-276 contribute to the S-adenosyl-L-methionine site; that span reads CPGG. The Proton acceptor role is filled by Lys-305.

The protein belongs to the class I-like SAM-binding methyltransferase superfamily. RNA methyltransferase RlmE family. RlmM subfamily. As to quaternary structure, monomer.

It is found in the cytoplasm. The enzyme catalyses cytidine(2498) in 23S rRNA + S-adenosyl-L-methionine = 2'-O-methylcytidine(2498) in 23S rRNA + S-adenosyl-L-homocysteine + H(+). Its function is as follows. Catalyzes the 2'-O-methylation at nucleotide C2498 in 23S rRNA. The protein is Ribosomal RNA large subunit methyltransferase M of Shewanella putrefaciens (strain CN-32 / ATCC BAA-453).